A 121-amino-acid polypeptide reads, in one-letter code: Basic phospholipase A2 VRV-PL-V (121 aa).

7 cysteine pairs are disulfide-bonded: C26-C115, C28-C44, C43-C95, C49-C121, C50-C88, C57-C81, and C75-C86. Ca(2+)-binding residues include Y27, G29, and G31. The active site involves H47. Position 48 (D48) interacts with Ca(2+). D89 is a catalytic residue.

This sequence belongs to the phospholipase A2 family. Group II subfamily. D49 sub-subfamily. In terms of assembly, monomer. It depends on Ca(2+) as a cofactor. As to expression, expressed by the venom gland.

The protein localises to the secreted. The enzyme catalyses a 1,2-diacyl-sn-glycero-3-phosphocholine + H2O = a 1-acyl-sn-glycero-3-phosphocholine + a fatty acid + H(+). Functionally, snake venom phospholipase A2 (PLA2) that has a low enzymatic activity. PLA2 catalyzes the calcium-dependent hydrolysis of the 2-acyl groups in 3-sn-phosphoglycerides. This Daboia russelii (Russel's viper) protein is Basic phospholipase A2 VRV-PL-V.